A 152-amino-acid polypeptide reads, in one-letter code: Transcriptional regulator MraZ (152 aa).

SpoVT-AbrB domains are found at residues 5–52 (ASAI…PIHE) and 81–124 (AHEC…DEAA).

This sequence belongs to the MraZ family. As to quaternary structure, forms oligomers.

It is found in the cytoplasm. The protein resides in the nucleoid. In Shewanella pealeana (strain ATCC 700345 / ANG-SQ1), this protein is Transcriptional regulator MraZ.